Consider the following 596-residue polypeptide: ATP-dependent lipid A-core flippase (596 aa).

6 consecutive transmembrane segments (helical) span residues 34 to 54, 80 to 100, 138 to 158, 164 to 184, 263 to 283, and 292 to 312; these read VWVL…EAGI, AAVV…GYLL, AVVF…ITLV, VVFL…IVAI, QPLT…IAVV, and VGGF…LKHL. An ABC transmembrane type-1 domain is found at 38 to 321; the sequence is VAGVLAMAAV…LMDVNQPLQR (284 aa). Residues 353–589 enclose the ABC transporter domain; that stretch reads IEFSHVSFSY…GGLYAHLHRI (237 aa). An ATP-binding site is contributed by 389–396; it reads GPSGSGKT.

Belongs to the ABC transporter superfamily. Lipid exporter (TC 3.A.1.106) family. Homodimer.

It is found in the cell inner membrane. The catalysed reaction is ATP + H2O + lipid A-core oligosaccharideSide 1 = ADP + phosphate + lipid A-core oligosaccharideSide 2.. Involved in lipopolysaccharide (LPS) biosynthesis. Translocates lipid A-core from the inner to the outer leaflet of the inner membrane. Transmembrane domains (TMD) form a pore in the inner membrane and the ATP-binding domain (NBD) is responsible for energy generation. This is ATP-dependent lipid A-core flippase from Burkholderia mallei (strain ATCC 23344).